The chain runs to 218 residues: Uracil-DNA glycosylase (218 aa).

Catalysis depends on Asp-68, which acts as the Proton acceptor.

It belongs to the uracil-DNA glycosylase (UDG) superfamily. UNG family. As to quaternary structure, homodimer. Interacts with protein OPG148. Component of the Uracil-DNA glycosylase(UDG)-OPG148-polymerase complex; OPG148 and UDG form a heterodimeric processivity factor that associates with OPG71 to form the processive polymerase holoenzyme.

The catalysed reaction is Hydrolyzes single-stranded DNA or mismatched double-stranded DNA and polynucleotides, releasing free uracil.. In terms of biological role, plays an essential role in viral replication as a component of the DNA polymerase processivity factor. Excises uracil residues from the DNA which can arise as a result of misincorporation of dUMP residues by DNA polymerase or due to deamination of cytosine. The polypeptide is Uracil-DNA glycosylase (OPG116) (Homo sapiens (Human)).